The primary structure comprises 128 residues: MQTAASSVVGLSAVLPAAVKGRSLQIQAPRRVALRVRAAAAAVAVEAAEVDYSSNISVFPMEACDLIGGEACNVQMYPEAKLSSSAAVAVSRAAAEEVDRDYLSYDEPTTVFPEEACDDLGGEFCKAT.

2 repeat units span residues 58-72 (VFPMEACDLIGGEAC) and 111-125 (VFPEEACDDLGGEFC). The interval 58–125 (VFPMEACDLI…ACDDLGGEFC (68 aa)) is 2 X 15 AA approximate repeats.

Component of high molecular weight thylakoid LFNRs-containing protein complexes containing LIR1, LFNR1, LFNR2, TIC62 and TROL proteins. Interacts directly with LFNR1 and LFNR2; LIR1 increases the affinity of LFNR1 and LFNR2 for TIC62 and subsequent thylakoid relocalization. In terms of processing, may form interchain disulfide bonds with LFNR1 and LFNR2.

The protein localises to the plastid. It is found in the chloroplast thylakoid membrane. The protein resides in the chloroplast envelope. It localises to the chloroplast stroma. Functionally, thylakoid-determinant subunit of high molecular weight LFNRs-containing protein complexes. The sequence is that of Light-regulated protein, chloroplastic (LIR1) from Oryza sativa subsp. japonica (Rice).